We begin with the raw amino-acid sequence, 617 residues long: MDREIRILHTADTHLGYRQYHSEVRRQDFFKAFETVIKDAVDMQVDAVVHAGDLFDSRNPTLEDLLETMNVLSRLKVANIPFFGIVGNHESKQSTQWLDLFEEMGLAGRLGKAPKMVGDVAIYGIDSVPKSKIPLFDYSGFEIPESLPENCRKLLVMHQIMQPSPFPDWDCAEVIENLPFKADAVLLGDYHEYEKIKVGESWVTYSGSTERNSASEKEPRSYSIITLSGEGLEISRRTIPTRNFLFITAKVDGEEKPFEQIFSTVNEHLEEIPESVVFLDVSGDSSSVLSFSEIEEYLLSKGALVVKVKDARVKEGIPEEVIKVAFHDPDRAVAEELRRMSLNDGGLIVDEVIRSPDVPRSRVDEETENRLLGLIEAIDFKDPDFMIKIPVSHVSPVDPSSSVSSIESSGSVSPIDSVSTVSPSSPSSSAIIKEPEELKPPGAAEEIENPKPAGVTEFTAAVAAKSETLMPPVRIQRSESLNESLNKIFEKHDVVPESPETAGSIAGSVETAVEDEISKVTPDSGVITAPQSSSPVSFSDNSQTGFSAISPPESIPSPEILKENSEADADEKPVDGKLSEEKPVGVPDKATKTVKQSHRKGKEKSAVPRQYNLGDYL.

4 residues coordinate Mn(2+): Asp-12, His-14, Asp-53, and Asn-88. His-89 serves as the catalytic Proton donor. His-158, Asp-189, and His-191 together coordinate Mn(2+). Over residues 395–432 the composition is skewed to low complexity; the sequence is SPVDPSSSVSSIESSGSVSPIDSVSTVSPSSPSSSAII. Disordered regions lie at residues 395–437 and 513–617; these read SPVD…EPEE and VEDE…GDYL. Residues 529-547 show a composition bias toward polar residues; sequence APQSSSPVSFSDNSQTGFS. Over residues 549–559 the composition is skewed to low complexity; the sequence is ISPPESIPSPE. A compositionally biased stretch (basic and acidic residues) spans 560–583; the sequence is ILKENSEADADEKPVDGKLSEEKP.

Belongs to the MRE11/RAD32 family. As to quaternary structure, homodimer. Forms a heterotetramer composed of two Mre11 subunits and two Rad50 subunits. Mn(2+) serves as cofactor.

With respect to regulation, nuclease activity is regulated by Rad50. Its function is as follows. Part of the Rad50/Mre11 complex, which is involved in the early steps of DNA double-strand break (DSB) repair. The complex may facilitate opening of the processed DNA ends to aid in the recruitment of HerA and NurA. Mre11 binds to DSB ends and has both double-stranded 3'-5' exonuclease activity and single-stranded endonuclease activity. The protein is DNA double-strand break repair protein Mre11 of Methanosarcina mazei (strain ATCC BAA-159 / DSM 3647 / Goe1 / Go1 / JCM 11833 / OCM 88) (Methanosarcina frisia).